The primary structure comprises 171 residues: ATP synthase subunit b (171 aa).

The helical transmembrane segment at 2–22 (VLVKMALGFLILLSPLCAMEL) threads the bilayer.

It belongs to the ATPase B chain family. In terms of assembly, F-type ATPases have 2 components, F(1) - the catalytic core - and F(0) - the membrane proton channel. F(1) has five subunits: alpha(3), beta(3), gamma(1), delta(1), epsilon(1). F(0) has three main subunits: a(1), b(2) and c(10-14). The alpha and beta chains form an alternating ring which encloses part of the gamma chain. F(1) is attached to F(0) by a central stalk formed by the gamma and epsilon chains, while a peripheral stalk is formed by the delta and b chains.

The protein localises to the cell inner membrane. Its function is as follows. F(1)F(0) ATP synthase produces ATP from ADP in the presence of a proton or sodium gradient. F-type ATPases consist of two structural domains, F(1) containing the extramembraneous catalytic core and F(0) containing the membrane proton channel, linked together by a central stalk and a peripheral stalk. During catalysis, ATP synthesis in the catalytic domain of F(1) is coupled via a rotary mechanism of the central stalk subunits to proton translocation. Component of the F(0) channel, it forms part of the peripheral stalk, linking F(1) to F(0). The chain is ATP synthase subunit b from Helicobacter acinonychis (strain Sheeba).